The following is a 253-amino-acid chain: NADH-quinone oxidoreductase subunit C (253 aa).

Disordered regions lie at residues 1–33 and 234–253; these read MSPDTPRGGDLHPPEPDAAATAGPEGTPPDTEP and IPVEYKGARIPPPDERRAYS.

Belongs to the complex I 30 kDa subunit family. NDH-1 is composed of 14 different subunits. Subunits NuoB, C, D, E, F, and G constitute the peripheral sector of the complex.

The protein localises to the cell membrane. The enzyme catalyses a quinone + NADH + 5 H(+)(in) = a quinol + NAD(+) + 4 H(+)(out). In terms of biological role, NDH-1 shuttles electrons from NADH, via FMN and iron-sulfur (Fe-S) centers, to quinones in the respiratory chain. The immediate electron acceptor for the enzyme in this species is believed to be a menaquinone. Couples the redox reaction to proton translocation (for every two electrons transferred, four hydrogen ions are translocated across the cytoplasmic membrane), and thus conserves the redox energy in a proton gradient. This Nocardia farcinica (strain IFM 10152) protein is NADH-quinone oxidoreductase subunit C.